A 205-amino-acid polypeptide reads, in one-letter code: Large ribosomal subunit protein bL25 (205 aa).

This sequence belongs to the bacterial ribosomal protein bL25 family. CTC subfamily. Part of the 50S ribosomal subunit; part of the 5S rRNA/L5/L18/L25 subcomplex. Contacts the 5S rRNA. Binds to the 5S rRNA independently of L5 and L18.

This is one of the proteins that binds to the 5S RNA in the ribosome where it forms part of the central protuberance. The chain is Large ribosomal subunit protein bL25 from Stutzerimonas stutzeri (strain A1501) (Pseudomonas stutzeri).